Here is a 675-residue protein sequence, read N- to C-terminus: MAQVAKKILVTCALPYANGSIHLGHMLEHIQADIWVRFQRMRGNQVHFICADDAHGTPIMLKAQQMGIEPEQMIAEMSQEHQQDFAGFAISYDNYHSTHSDENRELSSLIYGRLKANGYIKNRTISQLYDPEKGMFLPDRFVKGTCPKCKAPEQYGDNCEVCGATYSPTELIDPKSAVSGATPVMRESEHFFFDLPAFSDMLQAWTRSGALQEQVANKMQEWFDSGLQQWDITRDAPYFGFEVPDAPGKYFYVWLDAPIGYMGAFKNLCDKRGDLDFDEFWGKDAKTDLYHFIGKDIVYFHSLFWPAMLEGSNFRKPTNLFVHGYVTVNGAKMSKSRGTFIKAGTYLKYLDADCLRYYYAAKLSSRIDDIDLNLEDFVQRVNADIVNKVVNLASRNAGFINKRFAGQLADQLADPVLYKTFTDAATSIADAYNNRESGKAIREIMALADVANRYVDEQAPWVVAKQEGRDADLHAICSMGINLFRVLMTYLKPVLPSLTERTEAFLNTELTWDSIEQPLLGHSITAFKALFNRIDLDKVNEMVASSKEDMAPATRVTGPLADDPIQETISFDDFAKVDMRIALIQQAEFVEGSDKLLKLTLELGGETRQIFSGIRSAYPDPKALEGRMTVMVANLAPRKMRFGVSEGMVMAAGPGGSDIFLLSPDSGAQPGMQVK.

Residues 15–25 (PYANGSIHLGH) carry the 'HIGH' region motif. Zn(2+)-binding residues include cysteine 146, cysteine 149, cysteine 159, and cysteine 162. The 'KMSKS' region motif lies at 332–336 (KMSKS). An ATP-binding site is contributed by lysine 335. A tRNA-binding domain is found at 573–675 (DFAKVDMRIA…SGAQPGMQVK (103 aa)).

Belongs to the class-I aminoacyl-tRNA synthetase family. MetG type 1 subfamily. Homodimer. The cofactor is Zn(2+).

The protein localises to the cytoplasm. It catalyses the reaction tRNA(Met) + L-methionine + ATP = L-methionyl-tRNA(Met) + AMP + diphosphate. Is required not only for elongation of protein synthesis but also for the initiation of all mRNA translation through initiator tRNA(fMet) aminoacylation. The polypeptide is Methionine--tRNA ligase (Yersinia pseudotuberculosis serotype IB (strain PB1/+)).